The following is a 129-amino-acid chain: UPF0047 protein Mb2586c (129 aa).

The protein belongs to the UPF0047 family.

In Mycobacterium bovis (strain ATCC BAA-935 / AF2122/97), this protein is UPF0047 protein Mb2586c.